Reading from the N-terminus, the 939-residue chain is Isoleucine--tRNA ligase (939 aa).

Residues 58–68 (PYANGDIHIGH) carry the 'HIGH' region motif. E574 contributes to the L-isoleucyl-5'-AMP binding site. The 'KMSKS' region motif lies at 615-619 (KMSKS). ATP is bound at residue K618. Residues C902, C905, C922, and C925 each coordinate Zn(2+).

Belongs to the class-I aminoacyl-tRNA synthetase family. IleS type 1 subfamily. Monomer. Requires Zn(2+) as cofactor.

The protein resides in the cytoplasm. It catalyses the reaction tRNA(Ile) + L-isoleucine + ATP = L-isoleucyl-tRNA(Ile) + AMP + diphosphate. Catalyzes the attachment of isoleucine to tRNA(Ile). As IleRS can inadvertently accommodate and process structurally similar amino acids such as valine, to avoid such errors it has two additional distinct tRNA(Ile)-dependent editing activities. One activity is designated as 'pretransfer' editing and involves the hydrolysis of activated Val-AMP. The other activity is designated 'posttransfer' editing and involves deacylation of mischarged Val-tRNA(Ile). This is Isoleucine--tRNA ligase from Aromatoleum aromaticum (strain DSM 19018 / LMG 30748 / EbN1) (Azoarcus sp. (strain EbN1)).